Reading from the N-terminus, the 159-residue chain is MGGLKKPKKKYLAGKPKKIWNKQLLLEELQLMGEYGLRNKKELWLARARLKWITRRARSLLSMTAEERAPLEMPFKEKLYKMGFIEDPNVQLDRILSLDVRAILERRLQTIVYRMGLAKSIHHARQLIVHGHVAVAGRRVTSPGFLVPRELEDKISLIQ.

The 53-residue stretch at 106–158 (RRLQTIVYRMGLAKSIHHARQLIVHGHVAVAGRRVTSPGFLVPRELEDKISLI) folds into the S4 RNA-binding domain.

This sequence belongs to the universal ribosomal protein uS4 family. As to quaternary structure, part of the 30S ribosomal subunit. Contacts protein S5. The interaction surface between S4 and S5 is involved in control of translational fidelity.

In terms of biological role, one of the primary rRNA binding proteins, it binds directly to 16S rRNA where it nucleates assembly of the body of the 30S subunit. Its function is as follows. With S5 and S12 plays an important role in translational accuracy. This is Small ribosomal subunit protein uS4 from Pyrobaculum aerophilum (strain ATCC 51768 / DSM 7523 / JCM 9630 / CIP 104966 / NBRC 100827 / IM2).